The following is a 464-amino-acid chain: Protein FAM90A26 (464 aa).

4 disordered regions span residues 1–42, 70–293, 312–390, and 410–442; these read MMAC…DPRL, PPTL…AKRP, PFQI…DGAQ, and AAPSFHSPEKPGAFLAQSPHVSEKSEVPRVRVP. Composition is skewed to basic and acidic residues over residues 74 to 83 and 97 to 114; these read GKKEGKENLK and NKDKGEKEERPRQQDPQR. Residues 178-197 are compositionally biased toward low complexity; that stretch reads SALASLSPLRKASLSSSSSL.

The protein belongs to the FAM90 family.

The polypeptide is Protein FAM90A26 (Homo sapiens (Human)).